A 467-amino-acid polypeptide reads, in one-letter code: MEIEKQHVYISTVEVENLSDALFSGDEENGGSEERKTEINGNWIPATSITEAKINAKAKRRLRKNSSRDSGRGDSVSENGETQKAGLVVPTSPKGKVLDRRSRSGKGRGLPKKGGAGGKGVWGTPGQVYDVEEVDIKDPNYDDDQENCVYETVVLPLDERAFEKTLTPIIQEYFEHGDTNEVSEMLKDLNLGEMKYSVPVLAVSLALEGKASHREMTSKLISDLCGTVVSKTDVEKSFDKLLKDLPDLVLDSPRAPQLVGQFIARAVGDGILSSTYIDGYKGTVDSIQARAALDRATVLLSVTKGGKRIDNVWGSGGGQQSVKHLVKEIDMLLKEYLLSGDLLEAERCLQELEVPHFHHELVYEAIVMVLESTGEKTFKMMLDLLKSLSRSSVITMDQMKRGYERVYCEIPDINLDVPHSYSVLERFVEECFQAGIISKPLRDLCPSRGRKRFVSEGDGGRLKPESY.

Disordered regions lie at residues 21 to 43 (ALFS…NGNW) and 57 to 124 (KAKR…VWGT). Residues 57–63 (KAKRRLR) carry the Nuclear localization signal motif. Gly residues predominate over residues 112–123 (KKGGAGGKGVWG). 2 MI domains span residues 161–282 (AFEK…GYKG) and 324–447 (HLVK…LCPS). The Nuclear localization signal signature appears at 446–452 (PSRGRKR).

Belongs to the PDCD4 family. Interacts with EIF4A. In terms of tissue distribution, expressed in a broad spectrum of hematopoietic organs, such as thymus and bursa. Lower levels of expression detected in the kidney.

It localises to the nucleus. The protein resides in the cytoplasm. Functionally, inhibits translation initiation and cap-dependent translation. May excert its function by hindering the interaction between EIF4A and EIF4G. Inhibits the helicase activity of EIF4A. Binds RNA. Does not seem to be involved in apoptosis. This is Programmed cell death protein 4 (PDCD4) from Gallus gallus (Chicken).